The sequence spans 109 residues: Iron-sulfur cluster assembly protein CyaY (109 aa).

This sequence belongs to the frataxin family.

Functionally, involved in iron-sulfur (Fe-S) cluster assembly. May act as a regulator of Fe-S biogenesis. The chain is Iron-sulfur cluster assembly protein CyaY from Bordetella petrii (strain ATCC BAA-461 / DSM 12804 / CCUG 43448).